A 340-amino-acid polypeptide reads, in one-letter code: Glycerol-3-phosphate dehydrogenase [NAD(P)+] (340 aa).

Residues Ser-11, Trp-12, Arg-33, and Lys-106 each coordinate NADPH. Sn-glycerol 3-phosphate contacts are provided by Lys-106, Gly-137, and Ser-139. An NADPH-binding site is contributed by Ala-141. Residues Lys-192, Asp-245, Ser-255, Arg-256, and Asn-257 each coordinate sn-glycerol 3-phosphate. Lys-192 acts as the Proton acceptor in catalysis. Position 256 (Arg-256) interacts with NADPH. 2 residues coordinate NADPH: Val-280 and Glu-282.

It belongs to the NAD-dependent glycerol-3-phosphate dehydrogenase family.

It is found in the cytoplasm. The enzyme catalyses sn-glycerol 3-phosphate + NAD(+) = dihydroxyacetone phosphate + NADH + H(+). The catalysed reaction is sn-glycerol 3-phosphate + NADP(+) = dihydroxyacetone phosphate + NADPH + H(+). The protein operates within membrane lipid metabolism; glycerophospholipid metabolism. Functionally, catalyzes the reduction of the glycolytic intermediate dihydroxyacetone phosphate (DHAP) to sn-glycerol 3-phosphate (G3P), the key precursor for phospholipid synthesis. This chain is Glycerol-3-phosphate dehydrogenase [NAD(P)+], found in Bacillus cereus (strain G9842).